An 81-amino-acid chain; its full sequence is Large ribosomal subunit protein bL31B (81 aa).

The protein belongs to the bacterial ribosomal protein bL31 family. Type B subfamily. Part of the 50S ribosomal subunit.

This is Large ribosomal subunit protein bL31B from Lactobacillus acidophilus (strain ATCC 700396 / NCK56 / N2 / NCFM).